A 370-amino-acid chain; its full sequence is tRNA-specific 2-thiouridylase MnmA (370 aa).

ATP contacts are provided by residues 10–17 (AMSGGVDS) and Met-36. Cys-111 functions as the Nucleophile in the catalytic mechanism. Cys-111 and Cys-209 are joined by a disulfide. ATP is bound at residue Gly-135. The segment at 159 to 161 (KDQ) is interaction with tRNA. Residue Cys-209 is the Cysteine persulfide intermediate of the active site.

The protein belongs to the MnmA/TRMU family.

The protein localises to the cytoplasm. It carries out the reaction S-sulfanyl-L-cysteinyl-[protein] + uridine(34) in tRNA + AH2 + ATP = 2-thiouridine(34) in tRNA + L-cysteinyl-[protein] + A + AMP + diphosphate + H(+). Functionally, catalyzes the 2-thiolation of uridine at the wobble position (U34) of tRNA, leading to the formation of s(2)U34. This Koribacter versatilis (strain Ellin345) protein is tRNA-specific 2-thiouridylase MnmA.